The following is a 340-amino-acid chain: Cell division protein FtsQ (340 aa).

Residues 1–41 (MQGLNPFHRDQGAGGRPAPVRPAPARPAPVAPRTPRKDPAP) form a disordered region. The Cytoplasmic segment spans residues 1–55 (MQGLNPFHRDQGAGGRPAPVRPAPARPAPVAPRTPRKDPAPSRLAYRLNRMMLRP). Residues 19-32 (PVRPAPARPAPVAP) are compositionally biased toward pro residues. A helical transmembrane segment spans residues 56 to 78 (LVRRLVHVGLPAFLAALVAGIWL). At 79 to 340 (SDDTRRANLT…NAAKAKKKSG (262 aa)) the chain is on the periplasmic side. One can recognise a POTRA domain in the interval 104 to 172 (FMVKMMTIEG…GVLSAVVTER (69 aa)). The disordered stretch occupies residues 308 to 340 (RQARGQPELGPDGTPLAPEATAGNAAKAKKKSG). The segment covering 324–333 (APEATAGNAA) has biased composition (low complexity).

It belongs to the FtsQ/DivIB family. FtsQ subfamily.

It is found in the cell inner membrane. Functionally, essential cell division protein. In Paracoccus denitrificans (strain Pd 1222), this protein is Cell division protein FtsQ.